Consider the following 270-residue polypeptide: Glutamate 5-kinase (270 aa).

K17 contacts ATP. S57, D144, and N160 together coordinate substrate. ATP contacts are provided by residues 180-181 and 222-228; these read SD and TGGMTSK.

Belongs to the glutamate 5-kinase family.

Its subcellular location is the cytoplasm. The enzyme catalyses L-glutamate + ATP = L-glutamyl 5-phosphate + ADP. It functions in the pathway amino-acid biosynthesis; L-proline biosynthesis; L-glutamate 5-semialdehyde from L-glutamate: step 1/2. Its function is as follows. Catalyzes the transfer of a phosphate group to glutamate to form L-glutamate 5-phosphate. This is Glutamate 5-kinase from Lactococcus lactis subsp. lactis (strain IL1403) (Streptococcus lactis).